Reading from the N-terminus, the 983-residue chain is Probable beta-galactosidase C (983 aa).

Positions 1 to 23 are cleaved as a signal peptide; sequence MRIFSFLFLLLLGILTGQGLVSG. 5 residues coordinate substrate: Tyr-82, Asn-127, Ala-128, Glu-129, and Asn-187. The active-site Proton donor is the Glu-188. An N-linked (GlcNAc...) asparagine glycan is attached at Asn-197. Residue Tyr-251 participates in substrate binding. An intrachain disulfide couples Cys-257 to Cys-304. An N-linked (GlcNAc...) asparagine glycan is attached at Asn-276. Catalysis depends on Glu-287, which acts as the Nucleophile. Tyr-353 contributes to the substrate binding site. Residues Asn-391, Asn-434, Asn-466, Asn-516, Asn-601, Asn-676, Asn-714, Asn-719, Asn-758, and Asn-804 are each glycosylated (N-linked (GlcNAc...) asparagine).

This sequence belongs to the glycosyl hydrolase 35 family.

The protein resides in the secreted. It catalyses the reaction Hydrolysis of terminal non-reducing beta-D-galactose residues in beta-D-galactosides.. In terms of biological role, cleaves beta-linked terminal galactosyl residues from gangliosides, glycoproteins, and glycosaminoglycans. The protein is Probable beta-galactosidase C (lacC) of Aspergillus fumigatus (strain CBS 144.89 / FGSC A1163 / CEA10) (Neosartorya fumigata).